A 151-amino-acid polypeptide reads, in one-letter code: Acidic phospholipase A2 1 (151 aa).

An N-terminal signal peptide occupies residues 1–21; the sequence is MNPAHLLVLSAVCVSLLGASS. A propeptide spanning residues 22–27 is cleaved from the precursor; sequence IPPQPL. Disulfide bonds link cysteine 38-cysteine 104, cysteine 54-cysteine 151, cysteine 56-cysteine 72, cysteine 71-cysteine 132, cysteine 78-cysteine 125, cysteine 88-cysteine 118, and cysteine 111-cysteine 123. Ca(2+) is bound by residues tyrosine 55, glycine 57, and glycine 59. Residue histidine 75 is part of the active site. Ca(2+) is bound at residue aspartate 76. The active site involves aspartate 126.

Requires Ca(2+) as cofactor. Expressed by the venom gland.

It localises to the secreted. The enzyme catalyses a 1,2-diacyl-sn-glycero-3-phosphocholine + H2O = a 1-acyl-sn-glycero-3-phosphocholine + a fatty acid + H(+). Snake venom phospholipase A2 (PLA2) that may exhibit cardiotoxicity, myotoxicity, antiplatelet activity, and edema-inducing activity. PLA2 catalyzes the calcium-dependent hydrolysis of the 2-acyl groups in 3-sn-phosphoglycerides. In Ophiophagus hannah (King cobra), this protein is Acidic phospholipase A2 1.